The following is a 31-amino-acid chain: U1-theraphotoxin-Cv1a (31 aa).

3 disulfides stabilise this stretch: cysteine 2-cysteine 16, cysteine 9-cysteine 21, and cysteine 15-cysteine 28.

In terms of tissue distribution, expressed by the venom gland.

The protein resides in the secreted. Insecticidal toxin that induces reversible paralysis in crickets but not in cockroaches and mice. Molecular target unknown. The protein is U1-theraphotoxin-Cv1a of Coremiocnemis valida (Singapore tarantula).